Consider the following 446-residue polypeptide: Tubulin gamma chain (446 aa).

Position 142-148 (142-148) interacts with GTP; the sequence is AGGTGSG.

This sequence belongs to the tubulin family. Interacts with mto1. Interacts with mto2.

Its subcellular location is the cytoplasm. It localises to the cytoskeleton. It is found in the microtubule organizing center. The protein resides in the spindle pole body. Functionally, tubulin is the major constituent of microtubules. The gamma chain is found at microtubule organizing centers (MTOC) such as the spindle poles or the centrosome, suggesting that it is involved in the minus-end nucleation of microtubule assembly. The polypeptide is Tubulin gamma chain (Schizosaccharomyces pombe (strain 972 / ATCC 24843) (Fission yeast)).